We begin with the raw amino-acid sequence, 426 residues long: Probable M18 family aminopeptidase 2 (426 aa).

Residues histidine 79, histidine 156, and histidine 399 each contribute to the Zn(2+) site.

It belongs to the peptidase M18 family. It depends on Zn(2+) as a cofactor.

This Mycobacterium leprae (strain TN) protein is Probable M18 family aminopeptidase 2 (apeB).